A 198-amino-acid chain; its full sequence is HTH-type transcriptional regulator BetI (198 aa).

The HTH tetR-type domain occupies 8-68; that stretch reads PLRRRELIDA…ATMRHLLREL (61 aa). The H-T-H motif DNA-binding region spans 31 to 50; that stretch reads TVAQIAHEAGVSPALAHHYF.

Its pathway is amine and polyamine biosynthesis; betaine biosynthesis via choline pathway [regulation]. Functionally, repressor involved in the biosynthesis of the osmoprotectant glycine betaine. It represses transcription of the choline transporter BetT and the genes of BetAB involved in the synthesis of glycine betaine. The protein is HTH-type transcriptional regulator BetI of Brucella canis (strain ATCC 23365 / NCTC 10854 / RM-666).